The following is a 129-amino-acid chain: Large ribosomal subunit protein eL32 (129 aa).

The protein belongs to the eukaryotic ribosomal protein eL32 family.

The protein is Large ribosomal subunit protein eL32 (rpl32e) of Methanosarcina mazei (strain ATCC BAA-159 / DSM 3647 / Goe1 / Go1 / JCM 11833 / OCM 88) (Methanosarcina frisia).